The chain runs to 140 residues: Large-conductance mechanosensitive channel (140 aa).

The next 2 membrane-spanning stretches (helical) occupy residues 11-31 (FAMRGNVVDMAVGIIIGGAFG) and 82-102 (GNFIQVTLDFIIIAFAVFLLV).

It belongs to the MscL family. Homopentamer.

It is found in the cell inner membrane. In terms of biological role, channel that opens in response to stretch forces in the membrane lipid bilayer. May participate in the regulation of osmotic pressure changes within the cell. The polypeptide is Large-conductance mechanosensitive channel (Parabacteroides distasonis (strain ATCC 8503 / DSM 20701 / CIP 104284 / JCM 5825 / NCTC 11152)).